We begin with the raw amino-acid sequence, 790 residues long: MSSLTRLLQEKRKNETSNSSPRTSADTLTTTPESQSLDLHSRNKSSSHIGSVSNSSSSDRNRANVPVPGSVTTVTQIYSEEDSSSTAGSSLDDRNQFSSSFLNANFAHTASFYGTSAQSRDRFGSLINDQGTAGLSSHGGSFAAQNRITSRLSTTSHTSGRAIPSLSSSIPYSVPNSNKDNNSSNSNSSSLSSSWLETYAGGMPNNISAIDSNVISSPKVDSVEPRFVISKQKLQKASMDSNNANATQSRSISRSGSFSSQLGNFFFSKNSKESSNSNSAGMSFSANSNGPSPNIKNPNVTNGSTPIPKPIRARQSSIYSASRQPTGSYTDNFYGSPSSVHDHLPPSQSVPRSQHSSIGDLKRFFKKSSNSNLSSNSNNVIPNGSPLSSGIAVPSHSHSSSHFAAGNNSYSTSYNGNGDTIYSHSHGGSGIPFSKRYIKTGADLGAGAGGSVKLAQRISDNKIFAVKEFRTKFENESKRDYVKKITSEYCIGTTLNHPNIIETIEIVYENDRILQVMEYCEYDLFAIVMSNKMSYEEICCCFKQILTGVQYLHSIGLAHRDLKLDNCVINEKGIVKLIDFGAAVVFSYPFSKNLVEASGIVGSDPYLAPEVCIFAKYDPRPVDIWSSAIIFACMILKKFPWKIPKLRDNSFKLFCSGRDCDSLSSLVTRTPDPPSYDESHSTEKKKPESSSNNVSDPNNVNIGPQRLLHSLPEETQHIVGRMIDLAPACRGNIEEIMEDPWIRSIDMCHLVEDGLSFKVVRGEDHHHTQVDQSEAHIAGLEKKKKKQNNQ.

The tract at residues 1–68 (MSSLTRLLQE…DRNRANVPVP (68 aa)) is disordered. The span at 16 to 38 (TSNSSPRTSADTLTTTPESQSLD) shows a compositional bias: polar residues. Residues 46–58 (SSHIGSVSNSSSS) show a composition bias toward low complexity. Residue serine 47 is modified to Phosphoserine; by autocatalysis. Phosphoserine is present on residues serine 85, serine 90, serine 100, serine 111, serine 116, serine 125, serine 137, and serine 141. The segment covering 151-175 (RLSTTSHTSGRAIPSLSSSIPYSVP) has biased composition (polar residues). Disordered stretches follow at residues 151 to 188 (RLSTTSHTSGRAIPSLSSSIPYSVPNSNKDNNSSNSNS) and 234 to 258 (LQKASMDSNNANATQSRSISRSGSF). Over residues 176–188 (NSNKDNNSSNSNS) the composition is skewed to low complexity. The span at 238 to 248 (SMDSNNANATQ) shows a compositional bias: polar residues. The segment covering 249 to 258 (SRSISRSGSF) has biased composition (low complexity). Serine 257 is subject to Phosphoserine; by autocatalysis. Phosphoserine is present on residues serine 259, serine 260, serine 288, serine 292, serine 317, serine 320, and serine 328. Low complexity predominate over residues 276 to 289 (NSNSAGMSFSANSN). Residues 276-357 (NSNSAGMSFS…QSVPRSQHSS (82 aa)) are disordered. 3 stretches are compositionally biased toward polar residues: residues 290–305 (GPSPNIKNPNVTNGST), 314–339 (RQSSIYSASRQPTGSYTDNFYGSPSS), and 346–357 (PSQSVPRSQHSS). Tyrosine 334 carries the post-translational modification Phosphotyrosine. A phosphoserine mark is found at serine 336, serine 353, and serine 356. Serine 357 bears the Phosphoserine; by autocatalysis mark. Position 385 is a phosphoserine (serine 385). The Protein kinase domain maps to 438-742 (IKTGADLGAG…IEEIMEDPWI (305 aa)). ATP is bound by residues 444-452 (LGAGAGGSV) and lysine 467. The Proton acceptor role is filled by aspartate 561. Disordered regions lie at residues 666–704 (LVTRTPDPPSYDESHSTEKKKPESSSNNVSDPNNVNIGP) and 766–790 (HHTQVDQSEAHIAGLEKKKKKQNNQ). Positions 677-688 (DESHSTEKKKPE) are enriched in basic and acidic residues. A compositionally biased stretch (low complexity) spans 689-701 (SSSNNVSDPNNVN).

Belongs to the protein kinase superfamily. Ser/Thr protein kinase family. As to quaternary structure, interacts with TIP41. In terms of processing, hyperphosphorylated in nitrogen-rich growth medium. Nitrogen limitation (or rapamycin treatment) leads to substantial, though not complete dephosphorylation. Autophosphorylation plays only a minor role and seems not to be regulated by the quality of the nitrogen source.

It localises to the cytoplasm. The enzyme catalyses L-seryl-[protein] + ATP = O-phospho-L-seryl-[protein] + ADP + H(+). It carries out the reaction L-threonyl-[protein] + ATP = O-phospho-L-threonyl-[protein] + ADP + H(+). With respect to regulation, dephosphorylation by SIT4 activates NPR1 kinase activity. In terms of biological role, nutrient-regulated protein kinase that promotes the activity of at least 6 distinct transport systems for nitrogenous nutrients under conditions of nitrogen catabolite derepression. Under poor nitrogen growth conditions, required for post-Golgi sorting of the general amino acid permease GAP1 and the three known ammonia permeases, MEP1/2/3, to the plasma membrane. Also contributes to the stability and the retention of GAP1 at the plasma membrane. Inversely, promotes the degradation of tryptophan permease TAT2 under the same conditions. Activity is regulated by the TOR signaling pathway via phosphatase SIT4. Although thought to be involved in regulation of GLN3-dependent transcription by nitrogen catabolite repression, this seems to be an indirect effect from the reduced uptake of the nitrogen-repressing compound. This chain is Nitrogen permease reactivator protein (NPR1), found in Saccharomyces cerevisiae (strain ATCC 204508 / S288c) (Baker's yeast).